The following is a 1155-amino-acid chain: RHO1 GDP-GTP exchange protein 1 (1155 aa).

M1 bears the N-acetylmethionine mark. Positions 100–143 (NSSPQSFTGDQISPTNKKISINDSTRQDKGNSCTTTSSPSQKRS) are enriched in polar residues. Positions 100–249 (NSSPQSFTGD…HSRSKSSPVS (150 aa)) are disordered. S154 and S155 each carry phosphoserine. Over residues 155-167 (SPSLLSFSKNSGS) the composition is skewed to low complexity. Phosphothreonine is present on T180. Low complexity predominate over residues 190 to 227 (LHSSFNGKHSSSSTSSLFALESLKTQNRRSSNSSNHSS). Residues 228–243 (QYRRHTNQHQRHHSRS) show a composition bias toward basic residues. Phosphoserine is present on S433. In terms of domain architecture, DH spans 464-651 (KRQEAIYELF…KDLMKRIDRA (188 aa)). The 296-residue stretch at 842–1137 (TNRVNDVLIC…RMLKSYAKKI (296 aa)) folds into the CNH domain.

Stimulates the exchange of RHO1 GDP-bound form into GTP-bound form. This is RHO1 GDP-GTP exchange protein 1 (ROM1) from Saccharomyces cerevisiae (strain ATCC 204508 / S288c) (Baker's yeast).